The primary structure comprises 1212 residues: Filamin-A-interacting protein 1 (1212 aa).

Residues 1 to 15 (MRSRNQGGESSSNGH) show a composition bias toward polar residues. A disordered region spans residues 1 to 73 (MRSRNQGGES…SEKKTKKSVE (73 aa)). 2 stretches are compositionally biased toward basic and acidic residues: residues 32–47 (PSED…KEED) and 60–73 (PSGE…KSVE). Residue S137 is modified to Phosphoserine. 2 coiled-coil regions span residues 191–575 (DYMN…DELM) and 623–777 (PEDN…ELEL). Disordered regions lie at residues 871–898 (WMRK…HPGE) and 948–975 (KPRI…GPER). Phosphoserine is present on S978. A disordered region spans residues 1102 to 1190 (VSTGTVLRSP…TKFQPRAETQ (89 aa)). Positions 1124–1138 (VTSTITITPVTTSST) are enriched in low complexity. The span at 1139-1155 (RGTQSVSGQDGSSQRPT) shows a compositional bias: polar residues.

It belongs to the FILIP1 family. As to quaternary structure, interacts with FLNA. Interacts with RHOD (in GTP-bound form). Expressed in muscle tissue, including heart. Found in cortical ventricular zone.

It is found in the cytoplasm. The protein resides in the cytoskeleton. Its subcellular location is the stress fiber. Its function is as follows. By acting through a filamin-A/F-actin axis, it controls the start of neocortical cell migration from the ventricular zone. May be able to induce the degradation of Filamin A. In Rattus norvegicus (Rat), this protein is Filamin-A-interacting protein 1 (Filip1).